Consider the following 238-residue polypeptide: Uridylate kinase (238 aa).

12 to 15 (KLSG) lines the ATP pocket. A UMP-binding site is contributed by G54. ATP-binding residues include G55 and R59. Residues D74 and 135–142 (TGNPFFTT) each bind UMP. ATP contacts are provided by T162, Y168, and D171.

This sequence belongs to the UMP kinase family. In terms of assembly, homohexamer.

It is found in the cytoplasm. The enzyme catalyses UMP + ATP = UDP + ADP. It functions in the pathway pyrimidine metabolism; CTP biosynthesis via de novo pathway; UDP from UMP (UMPK route): step 1/1. Inhibited by UTP. Catalyzes the reversible phosphorylation of UMP to UDP. The polypeptide is Uridylate kinase (Bordetella bronchiseptica (strain ATCC BAA-588 / NCTC 13252 / RB50) (Alcaligenes bronchisepticus)).